Consider the following 83-residue polypeptide: Small ribosomal subunit protein uS17 (83 aa).

The protein belongs to the universal ribosomal protein uS17 family. Part of the 30S ribosomal subunit.

Its function is as follows. One of the primary rRNA binding proteins, it binds specifically to the 5'-end of 16S ribosomal RNA. This Campylobacter concisus (strain 13826) protein is Small ribosomal subunit protein uS17.